Consider the following 288-residue polypeptide: Beta-lactamase CARB-4 (288 aa).

An N-terminal signal peptide occupies residues M1 to A17. Residue S65 is the Acyl-ester intermediate of the active site. An intrachain disulfide couples C72 to C118. R229 to G231 lines the substrate pocket.

It belongs to the class-A beta-lactamase family.

It carries out the reaction a beta-lactam + H2O = a substituted beta-amino acid. Its activity is regulated as follows. Inhibited by clavulanic acid and sulbactam. Functionally, hydrolyzes carbenicillin. Methicillin and oxacillin are weakly hydrolyzed. In Pseudomonas aeruginosa, this protein is Beta-lactamase CARB-4 (carB4).